The chain runs to 246 residues: Probable transcriptional regulatory protein RB5500 (246 aa).

It belongs to the TACO1 family.

The protein resides in the cytoplasm. This is Probable transcriptional regulatory protein RB5500 from Rhodopirellula baltica (strain DSM 10527 / NCIMB 13988 / SH1).